The chain runs to 688 residues: SRSF protein kinase 2 (688 aa).

The segment at methionine 1 to lysine 65 is disordered. The span at leucine 22–proline 43 shows a compositional bias: pro residues. A compositionally biased stretch (acidic residues) spans glutamate 44–alanine 61. Serine 52 carries the post-translational modification Phosphoserine. One can recognise a Protein kinase domain in the interval tyrosine 81–proline 684. Residues leucine 87–valine 95 and lysine 110 contribute to the ATP site. Aspartate 214 functions as the Proton acceptor in the catalytic mechanism. Disordered stretches follow at residues tryptophan 239 to lysine 277, glycine 329 to lysine 444, and serine 469 to leucine 501. The span at serine 265–lysine 277 shows a compositional bias: basic residues. Serine 380 carries the post-translational modification Phosphoserine. Residues glutamine 397 to alanine 421 show a composition bias toward acidic residues. The segment covering serine 423–glutamine 433 has biased composition (polar residues). Residue serine 475 is modified to Phosphoserine. Threonine 478 carries the post-translational modification Phosphothreonine. A phosphoserine mark is found at serine 484, serine 486, and serine 490. Threonine 492 carries the phosphothreonine; by PKB/AKT1 modification. Phosphoserine occurs at positions 494 and 497. The residue at position 588 (serine 588) is a Phosphoserine; by CK2.

The protein belongs to the protein kinase superfamily. CMGC Ser/Thr protein kinase family. As to quaternary structure, associates with U4/U6-U5 tri-small nuclear ribonucleoproteins (U4/U6-U5 tri-snRNPs). Interacts with PKB/AKT1 in a phosphorylation-dependent manner. The phosphorylated form (by PKB/AKT1) interacts with YWHAB and YWHAE. Interaction with YWHAB suppresses its cleavage by caspases and inhibits the release of its N-terminal pro-apoptotic fragment. Interacts with SFN. Interacts with ACIN1. Interacts with POLR2A/RNA polymerase II; the interaction occurs during the co-transcriptional formation of inappropriate R-loops. Mg(2+) is required as a cofactor. In terms of processing, phosphorylation at Thr-492 by PKB/AKT1 enhances its stimulatory activity in triggering cyclin-D1 (CCND1) expression and promoting apoptosis in neurons, which can be blocked by YWHAB. It also enhances its protein kinase activity toward ACIN1 and SRSF2, promotes its nuclear translocation and prevents its proteolytic cleavage. Post-translationally, proteolytically cleaved at Asp-139 and Asp-403 by caspase-3 during apoptotic cell death. Cleavage at Asp-139 which is the major site of cleavage, produces a small N-terminal fragment that translocates into nucleus and promotes VP16-induced apoptosis. Highly expressed in brain, moderately expressed in heart and skeletal muscle and at low levels in lung, liver, and kidney.

Its subcellular location is the cytoplasm. It is found in the nucleus. The protein localises to the nucleoplasm. The protein resides in the nucleus speckle. It localises to the chromosome. It carries out the reaction L-seryl-[protein] + ATP = O-phospho-L-seryl-[protein] + ADP + H(+). The enzyme catalyses L-threonyl-[protein] + ATP = O-phospho-L-threonyl-[protein] + ADP + H(+). Activated by phosphorylation on Ser-52 and Ser-588. In terms of biological role, serine/arginine-rich protein-specific kinase which specifically phosphorylates its substrates at serine residues located in regions rich in arginine/serine dipeptides, known as RS domains and is involved in the phosphorylation of SR splicing factors and the regulation of splicing. Promotes neuronal apoptosis by up-regulating cyclin-D1 (CCND1) expression. This is done by the phosphorylation of SRSF2, leading to the suppression of p53/TP53 phosphorylation thereby relieving the repressive effect of p53/TP53 on cyclin-D1 (CCND1) expression. Phosphorylates ACIN1, and redistributes it from the nuclear speckles to the nucleoplasm, resulting in cyclin A1 but not cyclin A2 up-regulation. Plays an essential role in spliceosomal B complex formation via the phosphorylation of DDX23/PRP28. Probably by phosphorylating DDX23, leads to the suppression of incorrect R-loops formed during transcription; R-loops are composed of a DNA:RNA hybrid and the associated non-template single-stranded DNA. Can mediate hepatitis B virus (HBV) core protein phosphorylation. Plays a negative role in the regulation of HBV replication through a mechanism not involving the phosphorylation of the core protein but by reducing the packaging efficiency of the pregenomic RNA (pgRNA) without affecting the formation of the viral core particles. This is SRSF protein kinase 2 from Homo sapiens (Human).